A 267-amino-acid polypeptide reads, in one-letter code: Tryptophan synthase alpha chain (267 aa).

Residues Glu-43 and Asp-54 each act as proton acceptor in the active site.

The protein belongs to the TrpA family. Tetramer of two alpha and two beta chains.

The enzyme catalyses (1S,2R)-1-C-(indol-3-yl)glycerol 3-phosphate + L-serine = D-glyceraldehyde 3-phosphate + L-tryptophan + H2O. It functions in the pathway amino-acid biosynthesis; L-tryptophan biosynthesis; L-tryptophan from chorismate: step 5/5. Functionally, the alpha subunit is responsible for the aldol cleavage of indoleglycerol phosphate to indole and glyceraldehyde 3-phosphate. The polypeptide is Tryptophan synthase alpha chain (Bacillus pumilus (strain SAFR-032)).